Reading from the N-terminus, the 309-residue chain is Glutaminase (309 aa).

Substrate is bound by residues Ser-65, Asn-117, Glu-162, Asn-169, Tyr-193, Tyr-245, and Val-263.

It belongs to the glutaminase family. Homotetramer.

The catalysed reaction is L-glutamine + H2O = L-glutamate + NH4(+). In Shouchella clausii (strain KSM-K16) (Alkalihalobacillus clausii), this protein is Glutaminase.